We begin with the raw amino-acid sequence, 343 residues long: N-acetyl-gamma-glutamyl-phosphate reductase (343 aa).

The active site involves cysteine 147.

Belongs to the NAGSA dehydrogenase family. Type 1 subfamily.

The protein localises to the cytoplasm. The enzyme catalyses N-acetyl-L-glutamate 5-semialdehyde + phosphate + NADP(+) = N-acetyl-L-glutamyl 5-phosphate + NADPH + H(+). The protein operates within amino-acid biosynthesis; L-arginine biosynthesis; N(2)-acetyl-L-ornithine from L-glutamate: step 3/4. Functionally, catalyzes the NADPH-dependent reduction of N-acetyl-5-glutamyl phosphate to yield N-acetyl-L-glutamate 5-semialdehyde. This is N-acetyl-gamma-glutamyl-phosphate reductase from Listeria monocytogenes serotype 4b (strain CLIP80459).